The primary structure comprises 152 residues: Deoxyuridine 5'-triphosphate nucleotidohydrolase (152 aa).

Substrate is bound by residues 71–73 (RSG), Asn84, 88–90 (LID), and Met98.

Belongs to the dUTPase family. The cofactor is Mg(2+).

The enzyme catalyses dUTP + H2O = dUMP + diphosphate + H(+). Its pathway is pyrimidine metabolism; dUMP biosynthesis; dUMP from dCTP (dUTP route): step 2/2. In terms of biological role, this enzyme is involved in nucleotide metabolism: it produces dUMP, the immediate precursor of thymidine nucleotides and it decreases the intracellular concentration of dUTP so that uracil cannot be incorporated into DNA. In Enterobacter sp. (strain 638), this protein is Deoxyuridine 5'-triphosphate nucleotidohydrolase.